We begin with the raw amino-acid sequence, 158 residues long: Transcription antitermination protein NusB (158 aa).

Belongs to the NusB family.

Its function is as follows. Involved in transcription antitermination. Required for transcription of ribosomal RNA (rRNA) genes. Binds specifically to the boxA antiterminator sequence of the ribosomal RNA (rrn) operons. In Bartonella henselae (strain ATCC 49882 / DSM 28221 / CCUG 30454 / Houston 1) (Rochalimaea henselae), this protein is Transcription antitermination protein NusB.